The following is a 125-amino-acid chain: Oxytocin-neurophysin 1 (125 aa).

A signal peptide spans 1 to 19 (MAGSSLACCLLGLLALTSA). A disulfide bridge connects residues cysteine 20 and cysteine 25. The residue at position 28 (glycine 28) is a Glycine amide. Disulfide bonds link cysteine 41–cysteine 85, cysteine 44–cysteine 58, cysteine 52–cysteine 75, cysteine 59–cysteine 65, cysteine 92–cysteine 104, cysteine 98–cysteine 116, and cysteine 105–cysteine 110.

Belongs to the vasopressin/oxytocin family. As to quaternary structure, interacts with oxytocin receptor (Ki=1.5 nM). Interacts with vasopressin V1aR/AVPR1A (Ki=37 nM), V1bR/AVPR1B (Ki=222 nM), and V2R/AVPR2 receptors (Ki=823 nM).

Its function is as follows. Neurophysin 1 specifically binds oxytocin. In terms of biological role, oxytocin causes contraction of the smooth muscle of the uterus and of the mammary gland. Acts by binding to oxytocin receptor (OXTR). This Ovis aries (Sheep) protein is Oxytocin-neurophysin 1 (OXT).